Reading from the N-terminus, the 60-residue chain is Metallothionein (60 aa).

Positions 1–28 are beta; that stretch reads MDPCDCSKTGKCNCGGSCTCTNCSCTSC. Positions 4, 6, 12, 14, 18, 20, 23, 25, 28, 32, 33, 35, 36, 40, 43, 47, 49, 54, 58, and 59 each coordinate a divalent metal cation. The tract at residues 29–60 is alpha; the sequence is KKSCCACCPSGCTKCASGCVCKGKTCDTTCCQ.

It belongs to the metallothionein superfamily. Type 1 family.

Functionally, metallothioneins have a high content of cysteine residues that bind various heavy metals. The chain is Metallothionein (mt) from Oryzias latipes (Japanese rice fish).